Consider the following 562-residue polypeptide: ATP synthase subunit beta, mitochondrial (562 aa).

2 stretches are compositionally biased toward low complexity: residues 1–13 (MASRRLLSSLLRS) and 20–40 (SKSPISNINPKLSSSSPSSKS). Disordered stretches follow at residues 1–43 (MASR…SRAS) and 58–83 (SAAAAAPPQPPPAKPEGGKGGGKITD). Residues 1–55 (MASRRLLSSLLRSSSRRSVSKSPISNINPKLSSSSPSSKSRASPYGYLLTRAAEY) constitute a mitochondrion transit peptide. 237–244 (GGAGVGKT) provides a ligand contact to ATP.

It belongs to the ATPase alpha/beta chains family. F-type ATPases have 2 components, CF(1) - the catalytic core - and CF(0) - the membrane proton channel. CF(1) has five subunits: alpha(3), beta(3), gamma(1), delta(1), epsilon(1). CF(0) has three main subunits: a, b and c.

It localises to the mitochondrion. It is found in the mitochondrion inner membrane. It catalyses the reaction ATP + H2O + 4 H(+)(in) = ADP + phosphate + 5 H(+)(out). Its function is as follows. Mitochondrial membrane ATP synthase (F(1)F(0) ATP synthase or Complex V) produces ATP from ADP in the presence of a proton gradient across the membrane which is generated by electron transport complexes of the respiratory chain. F-type ATPases consist of two structural domains, F(1) - containing the extramembraneous catalytic core, and F(0) - containing the membrane proton channel, linked together by a central stalk and a peripheral stalk. During catalysis, ATP synthesis in the catalytic domain of F(1) is coupled via a rotary mechanism of the central stalk subunits to proton translocation. Subunits alpha and beta form the catalytic core in F(1). Rotation of the central stalk against the surrounding alpha(3)beta(3) subunits leads to hydrolysis of ATP in three separate catalytic sites on the beta subunits. The sequence is that of ATP synthase subunit beta, mitochondrial (ATPB) from Hevea brasiliensis (Para rubber tree).